A 120-amino-acid polypeptide reads, in one-letter code: Large ribosomal subunit protein bL19c (120 aa).

This sequence belongs to the bacterial ribosomal protein bL19 family.

Its subcellular location is the plastid. It is found in the chloroplast. The polypeptide is Large ribosomal subunit protein bL19c (Phaeodactylum tricornutum (strain CCAP 1055/1)).